Consider the following 413-residue polypeptide: MTLFISDSIFSSTEKKGVDFDKAFAGYIVVENGLIQKVGKGDAPESLKSQAEKIIDARGKTITAGLVDAHTHLVHGGSREHELAMKLAGKTYLEIHASGGGIFSTVRATRAASKEELTQKALTSLDRMLIHGTTTAESKSGYGLDMETEIKCLEINSYLNKNHPIDIVSTYMGAHATPPEFKDNKEGYIKFMIEEVMPEVKKRGLAEFSDAFCEDKIFSVEETERIMKAAADLGFKLKLHADEIIPLKGAELAAKMNAHSAEHLMAISDEGITALAKSGTVAVLLPATSFFLMSPIYAPAKKMIEEGVRVALATDYNPGSSPTENLQMAMWAACYKMKLLPAQILRGVTINAAYAIDREKTIGSIEEGKQADLVIFDAPNIDFLVYHFGVNSVDQVWKKGKLVAEKGRLVYKN.

His-70 and His-72 together coordinate Fe(3+). Positions 70 and 72 each coordinate Zn(2+). Residues Arg-79, Tyr-142, and His-175 each contribute to the 4-imidazolone-5-propanoate site. An N-formimidoyl-L-glutamate-binding site is contributed by Tyr-142. His-240 is a binding site for Fe(3+). His-240 provides a ligand contact to Zn(2+). Position 243 (Glu-243) interacts with 4-imidazolone-5-propanoate. Asp-315 serves as a coordination point for Fe(3+). Asp-315 serves as a coordination point for Zn(2+). Asn-317 and Gly-319 together coordinate N-formimidoyl-L-glutamate. Ser-320 lines the 4-imidazolone-5-propanoate pocket.

It belongs to the metallo-dependent hydrolases superfamily. HutI family. It depends on Zn(2+) as a cofactor. Fe(3+) is required as a cofactor.

It is found in the cytoplasm. The catalysed reaction is 4-imidazolone-5-propanoate + H2O = N-formimidoyl-L-glutamate. Its pathway is amino-acid degradation; L-histidine degradation into L-glutamate; N-formimidoyl-L-glutamate from L-histidine: step 3/3. Functionally, catalyzes the hydrolytic cleavage of the carbon-nitrogen bond in imidazolone-5-propanoate to yield N-formimidoyl-L-glutamate. It is the third step in the universal histidine degradation pathway. This Treponema denticola (strain ATCC 35405 / DSM 14222 / CIP 103919 / JCM 8153 / KCTC 15104) protein is Imidazolonepropionase.